Consider the following 65-residue polypeptide: Large ribosomal subunit protein bL35 (65 aa).

It belongs to the bacterial ribosomal protein bL35 family.

This is Large ribosomal subunit protein bL35 from Nitrosomonas europaea (strain ATCC 19718 / CIP 103999 / KCTC 2705 / NBRC 14298).